The primary structure comprises 529 residues: MQQRRPVRRALLSVSDKAGIVEFAQALSARGVELLSTGGTARLLAEKGLPVTEVSDYTGFPEMMDGRVKTLHPKVHGGILGRRGQDDAIMEEHQIQPIDMVVVNLYPFAQTVAREGCSLEDAVENIDIGGPTMVRSAAKNHKDVAIVVKSSDYDAIIKEMDDNEGSLTLATRFDLAIKAFEHTAAYDSMIANYFGSMVPAYHGESKEAAGRFPRTLNLNFIKKLDMRYGENSHQQAAFYIEENVKEASVATATQVQGKALSYNNIADTDAALECVKEFAEPACVIVKHANPCGVAIGNSILDAYDRAYKTDPTSAFGGIIAFNRELDAETAQAIISRQFVEVIIAPSASEEALKITAAKQNVRVLTCGQWGERVPGLDFKRVNGGLLVQDRDLGMVGAEELRVVTKRQPSEQELRDALFCWKVAKFVKSNAIVYAKNNMTIGIGAGQMSRVYSAKIAGIKAADEGLEVKGSSMASDAFFPFRDGIDAAAAAGVTCVIQPGGSIRDDEVIAAADEHGIAMLFTDMRHFRH.

In terms of domain architecture, MGS-like spans 1-148 (MQQRRPVRRA…KNHKDVAIVV (148 aa)). N6-acetyllysine is present on Lys-287.

Belongs to the PurH family.

The catalysed reaction is (6R)-10-formyltetrahydrofolate + 5-amino-1-(5-phospho-beta-D-ribosyl)imidazole-4-carboxamide = 5-formamido-1-(5-phospho-D-ribosyl)imidazole-4-carboxamide + (6S)-5,6,7,8-tetrahydrofolate. It catalyses the reaction IMP + H2O = 5-formamido-1-(5-phospho-D-ribosyl)imidazole-4-carboxamide. It functions in the pathway purine metabolism; IMP biosynthesis via de novo pathway; 5-formamido-1-(5-phospho-D-ribosyl)imidazole-4-carboxamide from 5-amino-1-(5-phospho-D-ribosyl)imidazole-4-carboxamide (10-formyl THF route): step 1/1. Its pathway is purine metabolism; IMP biosynthesis via de novo pathway; IMP from 5-formamido-1-(5-phospho-D-ribosyl)imidazole-4-carboxamide: step 1/1. In Escherichia coli (strain 55989 / EAEC), this protein is Bifunctional purine biosynthesis protein PurH.